A 1217-amino-acid chain; its full sequence is Myosin-5 (1217 aa).

Basic residues predominate over residues 1-11 (MAILKRGARNK). A disordered region spans residues 1-24 (MAILKRGARNKTHQEPAKRGGNNI). Positions 37-716 (VGVSDLTLLT…TLFALENMRD (680 aa)) constitute a Myosin motor domain. 130 to 137 (GESGAGKT) serves as a coordination point for ATP. A Phosphoserine modification is found at S358. The segment at 405–487 (SIGILDIYGF…PGIFAAMNDS (83 aa)) is actin-binding. IQ domains are found at residues 720–740 (HNMA…RIDA) and 741–766 (AVKI…YGTS). Positions 772-962 (KERRSMSLLG…TIFVRRGNPA (191 aa)) constitute a TH1 domain. Disordered regions lie at residues 956-1102 (VRRG…NPSE), 1145-1174 (GAKA…AQTV), and 1197-1217 (NKMR…DDDW). The span at 965–974 (KSKKKPRKKS) shows a compositional bias: basic residues. Polar residues predominate over residues 976–987 (GMSAPTTQSSKT). The segment covering 994 to 1007 (SSNNQNTTVSQSLN) has biased composition (low complexity). Pro residues predominate over residues 1025-1038 (PAPPPPGSKKPAPQ). The segment covering 1050–1071 (PQAQMQTQTQIPASQSSATQSS) has biased composition (low complexity). A compositionally biased stretch (pro residues) spans 1072 to 1081 (IPPPPPPPPS). Residues 1083 to 1145 (TSEPQFEAAY…PTAYMVKHEG (63 aa)) form the SH3 domain. Over residues 1162–1174 (IQNQSQPASAQTV) the composition is skewed to polar residues. The segment covering 1203–1217 (SDEEAAASSDNDDDW) has biased composition (acidic residues).

The protein belongs to the TRAFAC class myosin-kinesin ATPase superfamily. Myosin family. Post-translationally, phosphorylation of the TEDS site (Ser-358) is required for the polarization of the actin cytoskeleton. Phosphorylation probably activates the myosin-I ATPase activity.

Its subcellular location is the cytoplasm. It localises to the cytoskeleton. The protein resides in the actin patch. Type-I myosin implicated in the organization of the actin cytoskeleton. Required for proper actin cytoskeleton polarization. At the cell cortex, assembles in patch-like structures together with proteins from the actin-polymerizing machinery and promotes actin assembly. Functions as actin nucleation-promoting factor (NPF) for the Arp2/3 complex. The sequence is that of Myosin-5 (MYO5) from Candida glabrata (strain ATCC 2001 / BCRC 20586 / JCM 3761 / NBRC 0622 / NRRL Y-65 / CBS 138) (Yeast).